The primary structure comprises 225 residues: Transcriptional regulatory protein AfsQ1 (225 aa).

The 114-residue stretch at 3-116 (SLLLIEDDDA…VLDARIRAVL (114 aa)) folds into the Response regulatory domain. Asp52 is modified (4-aspartylphosphate). The segment at residues 124 to 223 (TDSASFGSLV…VRGVGYRLDP (100 aa)) is a DNA-binding region (ompR/PhoB-type).

In terms of processing, phosphorylated by AfsQ2.

Its subcellular location is the cytoplasm. It localises to the nucleoid. Its function is as follows. Forms part of a two-component regulatory system AfsQ1/AfsQ2 involved in secondary metabolism. The polypeptide is Transcriptional regulatory protein AfsQ1 (Streptomyces coelicolor (strain ATCC BAA-471 / A3(2) / M145)).